The primary structure comprises 156 residues: Snaclec 2 (156 aa).

The N-terminal stretch at 1–21 is a signal peptide; sequence MGRFIFLSSGLLVVFLSLSGA. Cystine bridges form between C25–C36, C53–C150, and C125–C142. A C-type lectin domain is found at 32–151; sequence FDQHCYRAFD…CGDDYPFVCK (120 aa).

It belongs to the snaclec family. As to quaternary structure, heterodimer; disulfide-linked. Expressed by the venom gland.

Its subcellular location is the secreted. Its function is as follows. Interferes with one step of hemostasis (modulation of platelet aggregation, or coagulation cascade, for example). This Bitis gabonica (Gaboon adder) protein is Snaclec 2.